Consider the following 198-residue polypeptide: T-cell surface glycoprotein CD3 epsilon chain (198 aa).

The signal sequence occupies residues 1–21 (MQSGTRWRVLGLCLLSIGVWG). Residues 22-117 (QDGNEEMGSI…RVCENCMEMD (96 aa)) are Extracellular-facing. Positions 37–107 (QVSISGTTVI…DASHHLYLKA (71 aa)) constitute an Ig-like domain. An intrachain disulfide couples C49 to C89. The chain crosses the membrane as a helical span at residues 118-138 (VMAVATIVIVDICITLGLLLL). The Cytoplasmic segment spans residues 139 to 198 (VYYWSKNRKAKAKPVTRGAGAGGRQRGQNKERPPPVPNPDYEPIRKGQQDLYSGLNQRRI). A disordered region spans residues 152–198 (PVTRGAGAGGRQRGQNKERPPPVPNPDYEPIRKGQQDLYSGLNQRRI). The tract at residues 166-183 (QNKERPPPVPNPDYEPIR) is NUMB-binding region. Positions 169–196 (ERPPPVPNPDYEPIRKGQQDLYSGLNQR) constitute an ITAM domain. Residues 170-177 (RPPPVPNP) form a proline-rich sequence region. 2 positions are modified to phosphotyrosine: Y179 and Y190. Residues 188–198 (DLYSGLNQRRI) show a composition bias toward polar residues.

As to quaternary structure, the TCR-CD3 complex is composed of a CD3D/CD3E and a CD3G/CD3E heterodimers that preferentially associate with TCRalpha and TCRbeta, respectively, to form TCRalpha/CD3E/CD3G and TCRbeta/CD3G/CD3E trimers. In turn, the hexamer interacts with CD3Z homodimer to form the TCR-CD3 complex. Alternatively, TCRalpha and TCRbeta can be replaced by TCRgamma and TCRdelta. Interacts with CD6. Interacts (via Proline-rich sequence) with NCK1; the interaction is ligand dependent but independent of tyrosine kinase activation. Post-translationally, phosphorylated on Tyr residues after T-cell receptor triggering by LCK in association with CD4/CD8.

It localises to the cell membrane. Its function is as follows. Part of the TCR-CD3 complex present on T-lymphocyte cell surface that plays an essential role in adaptive immune response. When antigen presenting cells (APCs) activate T-cell receptor (TCR), TCR-mediated signals are transmitted across the cell membrane by the CD3 chains CD3D, CD3E, CD3G and CD3Z. All CD3 chains contain immunoreceptor tyrosine-based activation motifs (ITAMs) in their cytoplasmic domain. Upon TCR engagement, these motifs become phosphorylated by Src family protein tyrosine kinases LCK and FYN, resulting in the activation of downstream signaling pathways. In addition of this role of signal transduction in T-cell activation, CD3E plays an essential role in correct T-cell development. Also participates in internalization and cell surface down-regulation of TCR-CD3 complexes via endocytosis sequences present in CD3E cytosolic region. In addition to its role as a TCR coreceptor, it serves as a receptor for ITPRIPL1. Ligand recognition inhibits T-cell activation by promoting interaction with NCK1, which prevents CD3E-ZAP70 interaction and blocks the ERK-NFkB signaling cascade and calcium influx. The polypeptide is T-cell surface glycoprotein CD3 epsilon chain (CD3E) (Macaca fascicularis (Crab-eating macaque)).